The chain runs to 700 residues: Acyl-coenzyme A oxidase 3 (700 aa).

It belongs to the acyl-CoA oxidase family. In terms of assembly, heteropentamer composed of five different subunits. FAD serves as cofactor.

It localises to the peroxisome. It carries out the reaction a 2,3-saturated acyl-CoA + O2 = a (2E)-enoyl-CoA + H2O2. It functions in the pathway lipid metabolism; peroxisomal fatty acid beta-oxidation. In terms of biological role, oxidizes aliphatic acyl-CoA substrates of different chain lengths such as hexanoyl-CoA, decanoyl-CoA and myristoyl-CoA as well as aromatic/heterocyclic ring-substituted chromogenic substrates, such as furylpropionyl-CoA. Of the above substrates, the efficiency of the enzyme, exhibits the following order: decanoyl-CoA &gt; myristoyl-CoA &gt; hexanoyl-CoA &gt; furyl-propionyl-CoA. The protein is Acyl-coenzyme A oxidase 3 (POX3) of Yarrowia lipolytica (strain CLIB 122 / E 150) (Yeast).